A 159-amino-acid polypeptide reads, in one-letter code: RNA pyrophosphohydrolase (159 aa).

In terms of domain architecture, Nudix hydrolase spans 6-149 (GFRPNVGIIL…KREVYRRALK (144 aa)). Positions 38-59 (GGINPQETPEDALYRELNEEVG) match the Nudix box motif.

Belongs to the Nudix hydrolase family. RppH subfamily. The cofactor is a divalent metal cation.

Functionally, accelerates the degradation of transcripts by removing pyrophosphate from the 5'-end of triphosphorylated RNA, leading to a more labile monophosphorylated state that can stimulate subsequent ribonuclease cleavage. This is RNA pyrophosphohydrolase from Pseudomonas savastanoi pv. phaseolicola (strain 1448A / Race 6) (Pseudomonas syringae pv. phaseolicola (strain 1448A / Race 6)).